A 137-amino-acid polypeptide reads, in one-letter code: uncharacterized protein (137 aa).

One can recognise a Ubiquitin-like domain in the interval 58–135; the sequence is VHVVAKTVRP…EVNLQMFLMN (78 aa).

The protein localises to the cytoplasm. Its subcellular location is the nucleus. This is an uncharacterized protein from Schizosaccharomyces pombe (strain 972 / ATCC 24843) (Fission yeast).